Here is a 621-residue protein sequence, read N- to C-terminus: DnaJ homolog subfamily C member 2 (621 aa).

M1 is modified (N-acetylmethionine). The tract at residues 23–31 (STLCQVEPV) is epitope (recognized by CD8(+) cytotoxic T-lymphocytes). Residues S47, S49, S60, and S63 each carry the phosphoserine modification. Residues 88 to 161 (DHYAVLGLGH…VKRRAFNSVD (74 aa)) form the J domain. The ZRF1-UBD stretch occupies residues 160–250 (VDPTFDNSVP…RDERRWIEKQ (91 aa)). Disordered stretches follow at residues 294 to 315 (EKKAKAEAKRKEQEAKEKQRQA) and 426 to 453 (KEEAEARMRQASKNTEKSTGGGGNGSKN). SANT domains lie at 449–511 (NGSK…KLDP) and 549–604 (TDFT…EMVK).

Component of ribosome-associated complex (RAC), a heterodimer composed of Hsp70/DnaK-type chaperone HSPA14 and Hsp40/DnaJ-type chaperone DNAJC2. Interacts (via ZRF1-UBD region) with ID1. Phosphorylated in M (mitotic) phase. In terms of tissue distribution, widely expressed.

The protein localises to the nucleus. It is found in the cytoplasm. It localises to the cytosol. Functionally, acts both as a chaperone in the cytosol and as a chromatin regulator in the nucleus. When cytosolic, acts as a molecular chaperone: component of the ribosome-associated complex (RAC), a complex involved in folding or maintaining nascent polypeptides in a folding-competent state. In the RAC complex, stimulates the ATPase activity of the ribosome-associated pool of Hsp70-type chaperones HSPA14 that bind to the nascent polypeptide chain. When nuclear, mediates the switching from polycomb-repressed genes to an active state: specifically recruited at histone H2A ubiquitinated at 'Lys-119' (H2AK119ub), and promotes the displacement of the polycomb PRC1 complex from chromatin, thereby facilitating transcription activation. This chain is DnaJ homolog subfamily C member 2 (DNAJC2), found in Homo sapiens (Human).